A 597-amino-acid chain; its full sequence is Miltiradiene synthase KSL2, chloroplastic (597 aa).

A chloroplast-targeting transit peptide spans 1 to 51; that stretch reads MSLAFNLRAIPFSGHTIQSRRGLFPVHESPMITTKPFVAVKCSLTTSTDLM. Mg(2+) contacts are provided by aspartate 329, aspartate 333, asparagine 473, and glutamate 481. The short motif at 329–333 is the DDXXD motif element; that stretch reads DDFFD.

It belongs to the terpene synthase family. Requires Mg(2+) as cofactor.

The protein resides in the plastid. The protein localises to the chloroplast. It catalyses the reaction (+)-copalyl diphosphate = miltiradiene + diphosphate. The protein operates within secondary metabolite biosynthesis; terpenoid biosynthesis. Its function is as follows. Involved in the biosynthesis of ent-kaurene diterpenoids natural products such as oridonin, miltiradiene, eriocalyxin B and nezukol, known to exhibit antitumor, anti-inflammatory and antibacterial activities. Catalyzes the conversion of (+)-copalyl diphosphate ((+)-CPP) to miltiradiene. The protein is Miltiradiene synthase KSL2, chloroplastic of Isodon japonicus (Scutellaria japonica).